The primary structure comprises 256 residues: Floral homeotic protein APETALA 1-1 (256 aa).

An MADS-box domain is found at 1-61 (MGRGRVQLKR…GKLFEYSTDS (61 aa)). The K-box domain maps to 88–178 (NTNWSMEYNR…SKQIKEREKV (91 aa)).

As to quaternary structure, homodimer capable of binding to CArG-box sequences. In terms of tissue distribution, expressed in some of the meristems of arrest-stage broccoli heads.

Its subcellular location is the nucleus. Its function is as follows. Transcription factor that promotes early floral meristem identity in synergy with LEAFY. Displays a redundant function with CAULIFLOWER in the up-regulation of LEAFY. Required subsequently for the transition of an inflorescence meristem into a floral meristem, and for the normal development of sepals and petals in flowers. Regulates positively B class homeotic proteins. The sequence is that of Floral homeotic protein APETALA 1-1 (1AP1) from Brassica oleracea var. italica (Broccoli).